The following is a 104-amino-acid chain: Replication restart protein PriB (104 aa).

The region spanning 1-101 (MTNRLELSGI…LHAEQIELID (101 aa)) is the SSB domain.

Belongs to the PriB family. In terms of assembly, homodimer. Interacts with DnaT. Interacts with PriA. Component of the replication restart primosome. Primosome assembly occurs via a 'hand-off' mechanism. PriA binds to replication forks, subsequently PriB then DnaT bind; DnaT then displaces ssDNA to generate the helicase loading substrate.

Its function is as follows. Involved in the restart of stalled replication forks, which reloads the replicative helicase on sites far from the origin of replication; the PriA-PriB pathway is the major replication restart pathway. During primosome assembly it facilitates complex formation between PriA and DnaT on DNA; stabilizes PriA on DNA. Stimulates the DNA unwinding activity of PriA helicase. In terms of biological role, binds single-stranded (ss)DNA at the primosome assembly site (PAS). One study finds it binds 15 nucleotide (nt) ssDNA. Another study finds the minimal ssDNA length for binding to PriB is 25 nt; prefers dT(30) over dA(30). Also binds 22 nt dsDNA. This is Replication restart protein PriB from Klebsiella pneumoniae subsp. pneumoniae (strain ATCC 700721 / MGH 78578).